Consider the following 708-residue polypeptide: Ubiquitin thioesterase ZRANB1 (708 aa).

A RanBP2-type 1 zinc finger spans residues 3-33 (ERGIKWACEYCTYENWPSAIKCTMCRAQRPS). Zn(2+) contacts are provided by C10, C13, C24, and C27. Positions 38 to 73 (TEDPFKSGSSDVGRDWDPSSTEGGSSPLICPDSSAR) are disordered. 2 RanBP2-type zinc fingers span residues 84 to 113 (NANK…QRRT) and 149 to 178 (RTQH…PRPN). 8 residues coordinate Zn(2+): C90, C93, C104, C107, C155, C158, C169, and C172. Residues 200–225 (RARWRGSCSSGNSQRRSPPATKRDSE) are disordered. A compositionally biased stretch (polar residues) spans 206–215 (SCSSGNSQRR). ANK repeat units lie at residues 260 to 290 (KKTD…SGGD) and 313 to 340 (YTLV…QQAA). Positions 392-641 (PTVQEKLFDE…LSAQELGNEE (250 aa)) are TRAF-binding. One can recognise an OTU domain in the interval 432–592 (LYALWNRTAG…RGHFSALVAM (161 aa)). C443 functions as the Nucleophile in the catalytic mechanism. H585 functions as the Proton acceptor in the catalytic mechanism.

Belongs to the peptidase C64 family. In terms of assembly, interacts with TRAF6. Interacts with APC. In terms of tissue distribution, widely expressed.

It localises to the cytoplasm. The protein localises to the nucleus. The enzyme catalyses Thiol-dependent hydrolysis of ester, thioester, amide, peptide and isopeptide bonds formed by the C-terminal Gly of ubiquitin (a 76-residue protein attached to proteins as an intracellular targeting signal).. Ubiquitin thioesterase, which specifically hydrolyzes 'Lys-29'-linked and 'Lys-33'-linked diubiquitin. Also cleaves 'Lys-63'-linked chains, but with 40-fold less efficiency compared to 'Lys-29'-linked ones. Positive regulator of the Wnt signaling pathway that deubiquitinates APC protein, a negative regulator of Wnt-mediated transcription. Acts as a regulator of autophagy by mediating deubiquitination of PIK3C3/VPS34, thereby promoting autophagosome maturation. Plays a role in the regulation of cell morphology and cytoskeletal organization. Required in the stress fiber dynamics and cell migration. The polypeptide is Ubiquitin thioesterase ZRANB1 (Homo sapiens (Human)).